A 247-amino-acid chain; its full sequence is uncharacterized protein (247 aa).

4–28 (ALVTGGSRGIGRATALLLAQEGYTV) is an NADP(+) binding site. Residue Ser-142 coordinates substrate. Tyr-156 (proton acceptor) is an active-site residue.

It belongs to the short-chain dehydrogenases/reductases (SDR) family.

This is an uncharacterized protein from Escherichia coli (strain K12).